The sequence spans 200 residues: MTIRYPNGKRYNQASQPQKTPIKTHTYSNRGMSLEEELNETNQYYLTHNIACVHKKPTPLQIVKVDYPARSAAVVKEAYFKQPSTTDYNGVYKGKYIDFEAKETKNKTSFPLQNFHLHQIEHMKQVVAHNGIAFVIIKFTLFDEFYLLDAKHIIAFWNRQNTGGRKSITKEEIEEHGSLLSCGYHPRIDYIRVLDTVYFS.

Residues 1–25 (MTIRYPNGKRYNQASQPQKTPIKTH) form a disordered region. Over residues 10–25 (RYNQASQPQKTPIKTH) the composition is skewed to polar residues. Mg(2+) contacts are provided by threonine 85, aspartate 87, glutamate 100, and glutamine 119.

This sequence belongs to the RecU family. Mg(2+) is required as a cofactor.

It localises to the cytoplasm. It carries out the reaction Endonucleolytic cleavage at a junction such as a reciprocal single-stranded crossover between two homologous DNA duplexes (Holliday junction).. In terms of biological role, endonuclease that resolves Holliday junction intermediates in genetic recombination. Cleaves mobile four-strand junctions by introducing symmetrical nicks in paired strands. Promotes annealing of linear ssDNA with homologous dsDNA. Required for DNA repair, homologous recombination and chromosome segregation. This chain is Holliday junction resolvase RecU, found in Bacillus cereus (strain G9842).